Reading from the N-terminus, the 65-residue chain is MARITVQDAVEKIGNRFNLVLIAARRARQIQINGKDPLVPEKNDKSTVIALREIEQGLIGNQIID.

It belongs to the RNA polymerase subunit omega family. The RNAP catalytic core consists of 2 alpha, 1 beta, 1 beta' and 1 omega subunit. When a sigma factor is associated with the core the holoenzyme is formed, which can initiate transcription.

The enzyme catalyses RNA(n) + a ribonucleoside 5'-triphosphate = RNA(n+1) + diphosphate. Its function is as follows. Promotes RNA polymerase assembly. Latches the N- and C-terminal regions of the beta' subunit thereby facilitating its interaction with the beta and alpha subunits. In Baumannia cicadellinicola subsp. Homalodisca coagulata, this protein is DNA-directed RNA polymerase subunit omega.